Here is a 125-residue protein sequence, read N- to C-terminus: Small ribosomal subunit protein bS6 (125 aa).

It belongs to the bacterial ribosomal protein bS6 family.

In terms of biological role, binds together with bS18 to 16S ribosomal RNA. The protein is Small ribosomal subunit protein bS6 of Campylobacter jejuni subsp. jejuni serotype O:23/36 (strain 81-176).